Consider the following 299-residue polypeptide: Probable adenylate kinase 7, mitochondrial (299 aa).

The transit peptide at 1-25 (MAGVLRLAGAARSPLARALAPAARR) directs the protein to the mitochondrion. 80-85 (GPQKHA) contributes to the ATP binding site. Residues 100–129 (SMGTLVRQELSPASSLYKKIANSVNEGKLV) form an NMP region. AMP contacts are provided by residues arginine 106, 127–129 (KLV), 157–160 (GIPR), and glutamine 164. Residues arginine 190 and 203-204 (LF) each bind ATP. An LID region spans residues 193–237 (GGDICPHCGQLFDFSKTASSDRNPSLGSCTWPSQVQHAAVLGLED).

This sequence belongs to the adenylate kinase family.

It localises to the mitochondrion. The catalysed reaction is AMP + ATP = 2 ADP. Catalyzes the reversible transfer of the terminal phosphate group between ATP and AMP. Plays an important role in cellular energy homeostasis and in adenine nucleotide metabolism. The sequence is that of Probable adenylate kinase 7, mitochondrial from Oryza sativa subsp. japonica (Rice).